The sequence spans 1358 residues: Phosphoinositide 3-kinase regulatory subunit 4 (1358 aa).

Residue Gly2 is the site of N-myristoyl glycine attachment. Residues 26-324 enclose the Protein kinase domain; it reads FEYDKSLGST…AFPEIFYTFL (299 aa). ATP contacts are provided by residues 32 to 40 and Lys53; that span reads LGSTRFFKV. Asp148 acts as the Proton acceptor in catalysis. 7 HEAT repeats span residues 373 to 411, 413 to 450, 458 to 495, 531 to 570, 572 to 610, 612 to 648, and 690 to 726; these read NGLVILVSVITSCLQTLKYYDSKLAALELILHLAPRLGV, ILLDRITPYLLHFSNDSVPRVRAEALRTLTKVLALVKE, IYPEYILPGIAHLAQDDATIVRLAYAENIALLAETALR, QALHEMVQQKVVTLLSDPENIVKQTLMENGITRLCVFFGR, KANDVLLSHMITFLNDKNDWHLRGAFFDSIVGVAAYVGW, SSSILKPLLQQGLSDAEEFVIVKALYALTCMCQLGLL, and DVYCKLMPYLDPYITQPIIQIERKLVLLSVLKEPVSR. Phosphoserine occurs at positions 808, 813, 853, and 865. A disordered region spans residues 875–899; sequence LPKGSDQEVIQTGKPPRSESSAGIC. 6 WD repeats span residues 991 to 1030, 1040 to 1079, 1093 to 1134, 1139 to 1178, 1182 to 1223, and 1237 to 1278; these read EHKSAVNRIRVSDEHSLFATCSNDGTVKIRNSQKMEGKTT, RVGGRVKTLTFCQGSHYLAIASDNGAVQLLGIEASKLPKS, KEDG…NAWT, LKSGLITSFAVDIHQCWLCIGTSSGTMACWDMRFQLPISS, PSRA…RRFT, and PSPH…RSYV. A disordered region spans residues 1307–1326; the sequence is KQKVGPSDDTPRRGPESLPV. Residues 1315–1326 are compositionally biased toward basic and acidic residues; sequence DTPRRGPESLPV. Thr1316 carries the post-translational modification Phosphothreonine. The stretch at 1327 to 1358 is one WD 7 repeat; that stretch reads GHHDIITDVATFQTTQGFIVTASRDGIVKVWK.

This sequence belongs to the protein kinase superfamily. Ser/Thr protein kinase family. Component of the PI3K (PI3KC3/PI3K-III/class III phosphatidylinositol 3-kinase) complex the core of which is composed of the catalytic subunit PIK3C3, the regulatory subunit PIK3R4 and BECN1 associating with additional regulatory/auxiliary subunits to form alternative complex forms. Alternative complex forms containing a fourth regulatory subunit in a mutually exclusive manner are PI3K complex I (PI3KC3-C1) containing ATG14, and PI3K complex II (PI3KC3-C2) containing UVRAG. PI3KC3-C1 displays a V-shaped architecture with PIK3R4 serving as a bridge between PIK3C3 and the ATG14:BECN1 subcomplex. Both, PI3KC3-C1 and PI3KC3-C2, can associate with further regulatory subunits, such as RUBCN, SH3GLB1/Bif-1, AMBRA1 and NRBF2. PI3KC3-C1 probably associates with PIK3CB. Interacts with RAB7A in the presence of PIK3C3/VPS34. Interacts with NRBF2. Interacts with ARMC3. The cofactor is Mn(2+). In terms of processing, myristoylated. Post-translationally, probably autophosphorylated.

Its subcellular location is the late endosome. The protein localises to the cytoplasmic vesicle. It is found in the autophagosome. It localises to the membrane. The catalysed reaction is L-seryl-[protein] + ATP = O-phospho-L-seryl-[protein] + ADP + H(+). It carries out the reaction L-threonyl-[protein] + ATP = O-phospho-L-threonyl-[protein] + ADP + H(+). Functionally, regulatory subunit of the PI3K complex that mediates formation of phosphatidylinositol 3-phosphate; different complex forms are believed to play a role in multiple membrane trafficking pathways: PI3KC3-C1 is involved in initiation of autophagosomes and PI3KC3-C2 in maturation of autophagosomes and endocytosis. Involved in regulation of degradative endocytic trafficking and cytokinesis, probably in the context of PI3KC3-C2. Its function is as follows. Regulatory subunit of the PI3K complex. May regulate membrane trafficking late in the endocytic pathway. The polypeptide is Phosphoinositide 3-kinase regulatory subunit 4 (PIK3R4) (Pongo abelii (Sumatran orangutan)).